An 877-amino-acid chain; its full sequence is Translation initiation factor IF-2 (877 aa).

A compositionally biased stretch (basic and acidic residues) spans 66 to 115; sequence PKKESTAKKTTKKDEVKKEEKKTTTKKESKNPAKAVSEKKDEVKKEEKQP. 3 disordered regions span residues 66–127, 187–208, and 241–290; these read PKKE…LEEK, SDESLKRKKKEKKNHPVASKKE, and ENKP…KESE. The segment covering 192 to 201 has biased composition (basic residues); the sequence is KRKKKEKKNH. Over residues 245 to 265 the composition is skewed to polar residues; it reads AQPTNKKQPNILKQSLNNSIN. Positions 376–543 constitute a tr-type G domain; sequence QRAPVITIMG…IVLLQADILE (168 aa). Residues 385–392 form a G1 region; sequence GHVDHGKT. 385-392 serves as a coordination point for GTP; it reads GHVDHGKT. The interval 410 to 414 is G2; that stretch reads GITQH. The interval 431 to 434 is G3; sequence DTPG. GTP contacts are provided by residues 431–435 and 485–488; these read DTPGH and NKMD. The tract at residues 485–488 is G4; sequence NKMD. Residues 521-523 form a G5 region; it reads SAK.

This sequence belongs to the TRAFAC class translation factor GTPase superfamily. Classic translation factor GTPase family. IF-2 subfamily.

It localises to the cytoplasm. Functionally, one of the essential components for the initiation of protein synthesis. Protects formylmethionyl-tRNA from spontaneous hydrolysis and promotes its binding to the 30S ribosomal subunits. Also involved in the hydrolysis of GTP during the formation of the 70S ribosomal complex. The sequence is that of Translation initiation factor IF-2 from Campylobacter lari (strain RM2100 / D67 / ATCC BAA-1060).